Reading from the N-terminus, the 410-residue chain is Magnesium transporter NIPA3 (410 aa).

Residues Met1–Ser67 lie on the Extracellular side of the membrane. 3 N-linked (GlcNAc...) asparagine glycosylation sites follow: Asn25, Asn35, and Asn50. Residues Leu68–Leu88 form a helical membrane-spanning segment. Residues Lys89–Glu114 lie on the Cytoplasmic side of the membrane. Residues Trp115–Tyr135 traverse the membrane as a helical segment. Residue Ala136 is a topological domain, extracellular. A helical membrane pass occupies residues Phe137–Leu157. The Cytoplasmic portion of the chain corresponds to Ser158–His165. The chain crosses the membrane as a helical span at residues Leu166 to Ile186. Residues His187–Pro207 are Extracellular-facing. A helical transmembrane segment spans residues Gly208–Ala228. Topologically, residues Pro229–Gln233 are cytoplasmic. A helical membrane pass occupies residues Thr234–Val254. The Extracellular portion of the chain corresponds to Lys255–His273. The helical transmembrane segment at Pro274–Leu294 threads the bilayer. The Cytoplasmic segment spans residues Asn295 to Ser304. A helical transmembrane segment spans residues Ile305–Leu325. The Extracellular portion of the chain corresponds to Phe326 to Asp336. Residues Ile337–Phe357 form a helical membrane-spanning segment. The Cytoplasmic portion of the chain corresponds to Lys358–Asp410.

The protein belongs to the NIPA family.

Its subcellular location is the golgi apparatus membrane. The enzyme catalyses Mg(2+)(in) = Mg(2+)(out). Functionally, acts as a Mg(2+) transporter. Can also transport other divalent cations such as Fe(2+), Sr(2+), Ba(2+), Mn(2+), Cu(2+) and Co(2+) but to a much less extent than Mg(2+). The protein is Magnesium transporter NIPA3 (NIPAL1) of Pongo abelii (Sumatran orangutan).